A 534-amino-acid polypeptide reads, in one-letter code: Lysophosphatidylcholine acyltransferase 1 (534 aa).

The disordered stretch occupies residues 1–22 (MRLRGCGPRAAPASSAGASDAR). Topologically, residues 1–57 (MRLRGCGPRAAPASSAGASDARLLAPPGRNPFVHELRLSALQKAQVALMTLTLFPVR) are cytoplasmic. The segment covering 7–22 (GPRAAPASSAGASDAR) has biased composition (low complexity). Residues 58–78 (LLVAAAMMLLAWPLALVASLG) traverse the membrane as a helical; Signal-anchor for type II membrane protein segment. Residues 79–534 (SAEKEPEQPP…GRKPVRKKLD (456 aa)) lie on the Lumenal side of the membrane. The short motif at 135-140 (HSSYFD) is the HXXXXD motif element. EF-hand domains are found at residues 379 to 414 (PVSDLLEDMFSLFDESGSGEVDLRECVVALSVVCRP) and 451 to 486 (VAELTVTDLFRAIDQEEKGKITFADFHRFAEMYPAF). Ca(2+)-binding residues include Asp392, Ser394, Ser396, Glu398, and Glu403. Residues 512 to 534 (GFCADFSPENSDAGRKPVRKKLD) form a disordered region. Over residues 523 to 534 (DAGRKPVRKKLD) the composition is skewed to basic and acidic residues. The short motif at 531 to 534 (KKLD) is the Di-lysine motif element.

Belongs to the 1-acyl-sn-glycerol-3-phosphate acyltransferase family. As to expression, erythrocytes.

Its subcellular location is the endoplasmic reticulum membrane. The protein localises to the golgi apparatus membrane. It localises to the cell membrane. It is found in the lipid droplet. It catalyses the reaction a 1-acyl-sn-glycero-3-phosphocholine + an acyl-CoA = a 1,2-diacyl-sn-glycero-3-phosphocholine + CoA. The catalysed reaction is a 1-acyl-sn-glycero-3-phosphate + an acyl-CoA = a 1,2-diacyl-sn-glycero-3-phosphate + CoA. It carries out the reaction a 1-O-alkyl-sn-glycero-3-phosphocholine + acetyl-CoA = a 1-O-alkyl-2-acetyl-sn-glycero-3-phosphocholine + CoA. The enzyme catalyses a 1-O-(1Z-alkenyl)-sn-glycero-3-phosphocholine + an acyl-CoA = a 1-O-(1Z-alkenyl)-2-acyl-sn-glycero-3-phosphocholine + CoA. It catalyses the reaction 1-acyl-sn-glycero-3-phospho-(1'-sn-glycerol) + an acyl-CoA = a 1,2-diacyl-sn-glycero-3-phospho-(1'-sn-glycerol) + CoA. The catalysed reaction is 1-hexadecanoyl-sn-glycero-3-phosphocholine + (9Z)-octadecenoyl-CoA = 1-hexadecanoyl-2-(9Z-octadecenoyl)-sn-glycero-3-phosphocholine + CoA. It carries out the reaction 1-hexadecanoyl-sn-glycero-3-phosphocholine + hexadecanoyl-CoA = 1,2-dihexadecanoyl-sn-glycero-3-phosphocholine + CoA. The enzyme catalyses 1-O-hexadecyl-sn-glycero-3-phosphocholine + hexadecanoyl-CoA = 1-O-hexadecyl-2-hexadecanoyl-sn-glycero-3-phosphocholine + CoA. It catalyses the reaction a 1-O-(1Z-alkenyl)-sn-glycero-3-phosphocholine + hexadecanoyl-CoA = 1-O-(1Z)-alkenyl-2-hexadecanoyl-sn-glycero-3-phosphocholine + CoA. The catalysed reaction is 1-hexadecanoyl-sn-glycero-3-phospho-(1'-sn-glycerol) + hexadecanoyl-CoA = 1,2-dihexadecanoyl-sn-glycero-3-phospho-(1'-sn-glycerol) + CoA. It carries out the reaction 1-dodecanoyl-sn-glycero-3-phosphocholine + hexadecanoyl-CoA = 1-dodecanoyl-2-hexadecanoyl-sn-glycero-3-phosphocholine + CoA. The enzyme catalyses 1-tetradecanoyl-sn-glycero-3-phosphocholine + hexadecanoyl-CoA = 1-tetradecanoyl-2-hexadecanoyl-sn-glycero-3-phosphocholine + CoA. It catalyses the reaction 1-O-octadecyl-sn-glycero-3-phosphocholine + hexadecanoyl-CoA = 1-O-octadecyl-2-hexadecanoyl-sn-glycero-3-phosphocholine + CoA. The catalysed reaction is 1-octadecanoyl-sn-glycero-3-phosphocholine + hexadecanoyl-CoA = 1-octadecanoyl-2-hexadecanoyl-sn-glycero-3-phosphocholine + CoA. It carries out the reaction 1-(9Z-octadecenoyl)-sn-glycero-3-phosphocholine + hexadecanoyl-CoA = 1-(9Z-octadecenoyl)-2-hexadecanoyl-sn-glycero-3-phosphocholine + CoA. The enzyme catalyses 1-eicosanoyl-sn-glycero-3-phosphocholine + hexadecanoyl-CoA = 1-eicosanoyl-2-hexadecanoyl-sn-glycero-3-phosphocholine + CoA. It catalyses the reaction hexanoyl-CoA + 1-hexadecanoyl-sn-glycero-3-phosphocholine = 1-hexadecanoyl-2-hexanoyl-sn-glycero-3-phosphocholine + CoA. The catalysed reaction is octanoyl-CoA + 1-hexadecanoyl-sn-glycero-3-phosphocholine = 1-hexadecanoyl-2-octanoyl-sn-glycero-3-phosphocholine + CoA. It carries out the reaction decanoyl-CoA + 1-hexadecanoyl-sn-glycero-3-phosphocholine = 1-hexadecanoyl-2-decanoyl-sn-glycero-3-phosphocholine + CoA. The enzyme catalyses dodecanoyl-CoA + 1-hexadecanoyl-sn-glycero-3-phosphocholine = 1-hexadecanoyl-2-dodecanoyl-sn-glycero-3-phosphocholine + CoA. It catalyses the reaction tetradecanoyl-CoA + 1-hexadecanoyl-sn-glycero-3-phosphocholine = 1-hexadecanoyl-2-tetradecanoyl-sn-glycero-3-phosphocholine + CoA. The catalysed reaction is (9Z,12Z)-octadecadienoyl-CoA + 1-hexadecanoyl-sn-glycero-3-phosphocholine = 1-hexadecanoyl-2-(9Z,12Z-octadecadienoyl)-sn-glycero-3-phosphocholine + CoA. It carries out the reaction (4Z,7Z,10Z,13Z,16Z,19Z)-docosahexaenoyl-CoA + 1-hexadecanoyl-sn-glycero-3-phosphocholine = 1-hexadecanoyl-2-(4Z,7Z,10Z,13Z,16Z,19Z-docosahexaenoyl)-sn-glycero-3-phosphocholine + CoA. The enzyme catalyses 1-hexadecanoyl-sn-glycero-3-phosphocholine + acetyl-CoA = 1-hexadecanoyl-2-acetyl-sn-glycero-3-phosphocholine + CoA. It catalyses the reaction eicosanoyl-CoA + 1-hexadecanoyl-sn-glycero-3-phosphocholine = 1-hexadecanoyl-2-eicosanoyl-sn-glycero-3-phosphocholine + CoA. The catalysed reaction is 1-O-hexadecyl-sn-glycero-3-phosphocholine + acetyl-CoA = 1-O-hexadecyl-2-acetyl-sn-glycero-3-phosphocholine + CoA. It carries out the reaction a 1-acyl-sn-glycero-3-phosphocholine + hexadecanoyl-CoA = 1-acyl-2-hexadecanoyl-sn-glycero-3-phosphocholine + CoA. The enzyme catalyses a 1-acyl-sn-glycero-3-phosphate + hexadecanoyl-CoA = 1-acyl-2-hexadecanoyl-sn-glycero-3-phosphate + CoA. It catalyses the reaction 1-acyl-sn-glycero-3-phospho-(1'-sn-glycerol) + hexadecanoyl-CoA = 1-acyl-2-hexadecanoyl-sn-glycero-3-phospho-(1'-sn-glycerol) + CoA. Its pathway is lipid metabolism; phospholipid metabolism. Exhibits acyltransferase activity. Exhibits acetyltransferase activity. Activity is calcium-independent. Catalyzes the conversion of lysophosphatidylcholine (1-acyl-sn-glycero-3-phosphocholine or LPC) into phosphatidylcholine (1,2-diacyl-sn-glycero-3-phosphocholine or PC). Catalyzes the conversion 1-acyl-sn-glycerol-3-phosphate (lysophosphatidic acid or LPA) into 1,2-diacyl-sn-glycerol-3-phosphate (phosphatidic acid or PA) by incorporating an acyl moiety at the sn-2 position of the glycerol backbone. Displays a clear preference for saturated fatty acyl-CoAs, and 1-myristoyl or 1-palmitoyl LPC as acyl donors and acceptors, respectively. Involved in platelet-activating factor (PAF) biosynthesis by catalyzing the conversion of the PAF precursor, 1-O-alkyl-sn-glycero-3-phosphocholine (lyso-PAF) into 1-O-alkyl-2-acetyl-sn-glycero-3-phosphocholine (PAF). May synthesize phosphatidylcholine in pulmonary surfactant, thereby playing a pivotal role in respiratory physiology. Involved in the regulation of lipid droplet number and size. In Homo sapiens (Human), this protein is Lysophosphatidylcholine acyltransferase 1 (LPCAT1).